We begin with the raw amino-acid sequence, 174 residues long: Inactive signal peptidase IA (174 aa).

The Cytoplasmic portion of the chain corresponds to 1–7 (MKKVVKY). Residues 8–28 (LISLILAIIIVLFVQTFVIVG) traverse the membrane as a helical segment. The Extracellular portion of the chain corresponds to 29-174 (HVIPNNDMSP…FSKWTVQFKS (146 aa)).

The protein belongs to the peptidase S26 family.

It localises to the cell membrane. Functionally, catalytically inactive. This chain is Inactive signal peptidase IA (spsA), found in Staphylococcus aureus (strain COL).